A 229-amino-acid polypeptide reads, in one-letter code: Urease accessory protein UreF (229 aa).

Belongs to the UreF family. UreD, UreF and UreG form a complex that acts as a GTP-hydrolysis-dependent molecular chaperone, activating the urease apoprotein by helping to assemble the nickel containing metallocenter of UreC. The UreE protein probably delivers the nickel.

Its subcellular location is the cytoplasm. Its function is as follows. Required for maturation of urease via the functional incorporation of the urease nickel metallocenter. This chain is Urease accessory protein UreF, found in Nostoc sp. (strain PCC 7120 / SAG 25.82 / UTEX 2576).